The chain runs to 178 residues: Large ribosomal subunit protein uL6 (178 aa).

Belongs to the universal ribosomal protein uL6 family. In terms of assembly, part of the 50S ribosomal subunit.

Its function is as follows. This protein binds to the 23S rRNA, and is important in its secondary structure. It is located near the subunit interface in the base of the L7/L12 stalk, and near the tRNA binding site of the peptidyltransferase center. This is Large ribosomal subunit protein uL6 from Kocuria rhizophila (strain ATCC 9341 / DSM 348 / NBRC 103217 / DC2201).